The primary structure comprises 273 residues: Glutamate 5-kinase (273 aa).

Lys-15 is a binding site for ATP. Ser-55, Asp-142, and Asn-158 together coordinate substrate. ATP is bound by residues 178-179 (SD) and 220-226 (TGGMLSK).

Belongs to the glutamate 5-kinase family.

It is found in the cytoplasm. The catalysed reaction is L-glutamate + ATP = L-glutamyl 5-phosphate + ADP. It functions in the pathway amino-acid biosynthesis; L-proline biosynthesis; L-glutamate 5-semialdehyde from L-glutamate: step 1/2. Catalyzes the transfer of a phosphate group to glutamate to form L-glutamate 5-phosphate. In Streptococcus pyogenes serotype M4 (strain MGAS10750), this protein is Glutamate 5-kinase.